We begin with the raw amino-acid sequence, 500 residues long: L-arabinose isomerase (500 aa).

Mn(2+) contacts are provided by E306, E333, H350, and H450.

This sequence belongs to the arabinose isomerase family. As to quaternary structure, homohexamer. The cofactor is Mn(2+).

It carries out the reaction beta-L-arabinopyranose = L-ribulose. Its pathway is carbohydrate degradation; L-arabinose degradation via L-ribulose; D-xylulose 5-phosphate from L-arabinose (bacterial route): step 1/3. Its function is as follows. Catalyzes the conversion of L-arabinose to L-ribulose. The polypeptide is L-arabinose isomerase (Yersinia pseudotuberculosis serotype I (strain IP32953)).